The primary structure comprises 465 residues: GTPase Der (465 aa).

2 EngA-type G domains span residues 3–167 (PLVA…PERS) and 179–352 (IHIA…VSAL). GTP contacts are provided by residues 9–16 (GRPNVGKS), 57–61 (DTGGM), 119–122 (NKID), 185–192 (GRPNVGKS), 232–236 (DTAGL), and 297–300 (NKWD). Positions 353 to 437 (RQFSTSEVNK…PVRFLFREGD (85 aa)) constitute a KH-like domain.

The protein belongs to the TRAFAC class TrmE-Era-EngA-EngB-Septin-like GTPase superfamily. EngA (Der) GTPase family. As to quaternary structure, associates with the 50S ribosomal subunit.

GTPase that plays an essential role in the late steps of ribosome biogenesis. This chain is GTPase Der, found in Xylella fastidiosa (strain M23).